The following is a 360-amino-acid chain: Phospho-N-acetylmuramoyl-pentapeptide-transferase (360 aa).

Transmembrane regions (helical) follow at residues 27-47 (IVSLLTALFLSLWMGPRLIAW), 72-92 (PTMGGLMILTSITISVLMWAY), 94-114 (SNPYVWCVLFVLVGYGIVGFI), 132-152 (WKYFWQSVIALAVAFTMFAVG), 168-188 (IMPQLGLWYVLLAYFVIVGTS), 199-219 (GLAIMPTVFVAAGLALVAWAT), 235-255 (FAGELVVVCTAIVGAGLGFLW), 263-283 (VFMGDVGSLALGGALGTIAVL), 288-308 (FLLLIMGGVFVVETLSVILQV), and 338-358 (VIVRFWIISLMLVLIGLATLK).

Belongs to the glycosyltransferase 4 family. MraY subfamily. Mg(2+) is required as a cofactor.

The protein localises to the cell inner membrane. The catalysed reaction is UDP-N-acetyl-alpha-D-muramoyl-L-alanyl-gamma-D-glutamyl-meso-2,6-diaminopimeloyl-D-alanyl-D-alanine + di-trans,octa-cis-undecaprenyl phosphate = di-trans,octa-cis-undecaprenyl diphospho-N-acetyl-alpha-D-muramoyl-L-alanyl-D-glutamyl-meso-2,6-diaminopimeloyl-D-alanyl-D-alanine + UMP. Its pathway is cell wall biogenesis; peptidoglycan biosynthesis. Catalyzes the initial step of the lipid cycle reactions in the biosynthesis of the cell wall peptidoglycan: transfers peptidoglycan precursor phospho-MurNAc-pentapeptide from UDP-MurNAc-pentapeptide onto the lipid carrier undecaprenyl phosphate, yielding undecaprenyl-pyrophosphoryl-MurNAc-pentapeptide, known as lipid I. This chain is Phospho-N-acetylmuramoyl-pentapeptide-transferase, found in Sodalis glossinidius (strain morsitans).